The chain runs to 153 residues: MIWVWPATGRGPGWWGIRRDPWGPEDSSCPCPRLPLSPTGPVGHSGPMGQCHPPVPSYRRGRRDQKDPPLRRQTSPPLPPHPWDRPLPWVPWIPLDLCRHGDPRHPWDPGAQSGYPRVREVRGVPADRPLRPCPRQGPRTAATRKESSCRIPS.

Disordered stretches follow at residues 24-87 (PEDS…DRPL) and 101-153 (GDPR…RIPS). Residues 27 to 37 (SSCPCPRLPLS) are compositionally biased toward low complexity. Residues 143-153 (TRKESSCRIPS) are compositionally biased toward basic and acidic residues.

This is an uncharacterized protein from Dryophytes versicolor (chameleon treefrog).